The following is a 96-amino-acid chain: Protein RnfH (96 aa).

The protein belongs to the UPF0125 (RnfH) family.

The sequence is that of Protein RnfH from Escherichia coli O17:K52:H18 (strain UMN026 / ExPEC).